The primary structure comprises 467 residues: Gamma-aminobutyric acid receptor subunit gamma-2 (467 aa).

Positions 1 to 39 (MSSPNIWSTGSSVYSTPVFSQKMTVWILLLLSLYPGFTS) are cleaved as a signal peptide. Over 40–275 (QKSDDDYEDY…FDLSRRMGYF (236 aa)) the chain is Extracellular. N52 and N129 each carry an N-linked (GlcNAc...) asparagine glycan. The cysteines at positions 190 and 204 are disulfide-linked. N247 carries N-linked (GlcNAc...) asparagine glycosylation. Residues 276–296 (TIQTYIPCTLIVVLSWVSFWI) traverse the membrane as a helical segment. The Cytoplasmic segment spans residues 297–302 (NKDAVP). A helical membrane pass occupies residues 303-322 (ARTSLGITTVLTMTTLSTIA). At 323–334 (RKSLPKVSYVTA) the chain is on the extracellular side. Residues 335 to 359 (MDLFVSVCFIFVFSALVEYGTLHYF) traverse the membrane as a helical segment. The Cytoplasmic segment spans residues 360-443 (VSNRKPSKDK…IHIRIAKMDS (84 aa)). The interaction with GABARAP stretch occupies residues 425 to 442 (RTGAWRHGRIHIRIAKMD). A helical membrane pass occupies residues 444–464 (YARIFFPTAFCLFNLVYWVSY). Residues 465-467 (LYL) lie on the Extracellular side of the membrane.

It belongs to the ligand-gated ion channel (TC 1.A.9) family. Gamma-aminobutyric acid receptor (TC 1.A.9.5) subfamily. GABRG2 sub-subfamily. As to quaternary structure, heteropentamer, formed by a combination of alpha (GABRA1-6), beta (GABRB1-3), gamma (GABRG1-3), delta (GABRD), epsilon (GABRE), rho (GABRR1-3), pi (GABRP) and theta (GABRQ) chains, each subunit exhibiting distinct physiological and pharmacological properties. Interacts with GABARAP. Interacts with KIF21B. Identified in a complex of 720 kDa composed of LHFPL4, NLGN2, GABRA1, GABRB2, GABRG2 and GABRB3. Interacts with LHFPL4. Interacts with SHISA7; interaction leads to the regulation of GABA(A) receptor trafficking, channel deactivation kinetics and pharmacology. Post-translationally, palmitoylated by ZDHHC3/GODZ; required for the accumulation of GABA(A) receptors at the postsynaptic membrane of inhibitory GABAergic synapses. In terms of processing, glycosylated.

It is found in the postsynaptic cell membrane. The protein localises to the cell membrane. The protein resides in the cell projection. Its subcellular location is the dendrite. It localises to the cytoplasmic vesicle membrane. It catalyses the reaction chloride(in) = chloride(out). With respect to regulation, allosterically activated by benzodiazepines. Activated by pentobarbital. Inhibited by the antagonist bicuculline. Inhibited by zinc ions. Potentiated by histamine. Functionally, gamma subunit of the heteropentameric ligand-gated chloride channel gated by gamma-aminobutyric acid (GABA), a major inhibitory neurotransmitter in the brain. GABA-gated chloride channels, also named GABA(A) receptors (GABAAR), consist of five subunits arranged around a central pore and contain GABA active binding site(s) located at the alpha and beta subunit interface(s). When activated by GABA, GABAARs selectively allow the flow of chloride anions across the cell membrane down their electrochemical gradient. Gamma-2/GABRG2-containing GABAARs are found at both synaptic and extrasynaptic sites. Chloride influx into the postsynaptic neuron following GABAAR opening decreases the neuron ability to generate a new action potential, thereby reducing nerve transmission. GABAARs containing alpha-1 and beta-2 or -3 subunits exhibit synaptogenic activity; the gamma-2 subunit being necessary but not sufficient to induce rapid synaptic contacts formation. Extrasynaptic gamma-2-containing receptors contribute to the tonic GABAergic inhibition. GABAARs function also as histamine receptor where histamine binds at the interface of two neighboring beta subunits and potentiates GABA response in a gamma-2 subunit-controlled manner. This is Gamma-aminobutyric acid receptor subunit gamma-2 (GABRG2) from Pongo abelii (Sumatran orangutan).